A 161-amino-acid polypeptide reads, in one-letter code: 3-isopropylmalate dehydratase small subunit (161 aa).

Belongs to the LeuD family. LeuD type 2 subfamily. Heterodimer of LeuC and LeuD.

It catalyses the reaction (2R,3S)-3-isopropylmalate = (2S)-2-isopropylmalate. Its pathway is amino-acid biosynthesis; L-leucine biosynthesis; L-leucine from 3-methyl-2-oxobutanoate: step 2/4. In terms of biological role, catalyzes the isomerization between 2-isopropylmalate and 3-isopropylmalate, via the formation of 2-isopropylmaleate. The polypeptide is 3-isopropylmalate dehydratase small subunit (Sulfolobus acidocaldarius (strain ATCC 33909 / DSM 639 / JCM 8929 / NBRC 15157 / NCIMB 11770)).